A 435-amino-acid chain; its full sequence is Glutamyl-tRNA reductase (435 aa).

Residues 49–52 (TCNR), Ser-109, 114–116 (ETQ), and Gln-120 each bind substrate. Cys-50 functions as the Nucleophile in the catalytic mechanism. 189–194 (GAGEMS) is an NADP(+) binding site.

This sequence belongs to the glutamyl-tRNA reductase family. Homodimer.

It catalyses the reaction (S)-4-amino-5-oxopentanoate + tRNA(Glu) + NADP(+) = L-glutamyl-tRNA(Glu) + NADPH + H(+). It functions in the pathway porphyrin-containing compound metabolism; protoporphyrin-IX biosynthesis; 5-aminolevulinate from L-glutamyl-tRNA(Glu): step 1/2. Catalyzes the NADPH-dependent reduction of glutamyl-tRNA(Glu) to glutamate 1-semialdehyde (GSA). The sequence is that of Glutamyl-tRNA reductase from Listeria monocytogenes serotype 4b (strain F2365).